Here is a 490-residue protein sequence, read N- to C-terminus: Protoporphyrinogen oxidase (490 aa).

Residues 7–12 (GGGIAG), 32–33 (EK), Trp-40, 61–64 (GPRT), and 466–468 (VSI) each bind FAD.

The protein belongs to the protoporphyrinogen/coproporphyrinogen oxidase family. Protoporphyrinogen oxidase subfamily. The cofactor is FAD.

It is found in the mitochondrion. It catalyses the reaction protoporphyrinogen IX + 3 O2 = protoporphyrin IX + 3 H2O2. It functions in the pathway porphyrin-containing compound metabolism; protoporphyrin-IX biosynthesis; protoporphyrin-IX from protoporphyrinogen-IX: step 1/1. In terms of biological role, catalyzes the 6-electron oxidation of protoporphyrinogen-IX to form protoporphyrin-IX. The protein is Protoporphyrinogen oxidase (hem14) of Schizosaccharomyces pombe (strain 972 / ATCC 24843) (Fission yeast).